Reading from the N-terminus, the 231-residue chain is 7-cyano-7-deazaguanine synthase (231 aa).

Position 11–21 (11–21 (LSAGLDSTVNA)) interacts with ATP. Positions 197, 205, 208, and 211 each coordinate Zn(2+).

This sequence belongs to the QueC family. Requires Zn(2+) as cofactor.

The catalysed reaction is 7-carboxy-7-deazaguanine + NH4(+) + ATP = 7-cyano-7-deazaguanine + ADP + phosphate + H2O + H(+). It participates in purine metabolism; 7-cyano-7-deazaguanine biosynthesis. Functionally, catalyzes the ATP-dependent conversion of 7-carboxy-7-deazaguanine (CDG) to 7-cyano-7-deazaguanine (preQ(0)). The polypeptide is 7-cyano-7-deazaguanine synthase (Bdellovibrio bacteriovorus (strain ATCC 15356 / DSM 50701 / NCIMB 9529 / HD100)).